A 342-amino-acid polypeptide reads, in one-letter code: Foldase protein PrsA (342 aa).

A signal peptide spans Met1 to Ala20. Residue Cys21 is the site of N-palmitoyl cysteine attachment. Residue Cys21 is the site of S-diacylglycerol cysteine attachment. The 94-residue stretch at His142–Val235 folds into the PpiC domain. The segment at Met297–Lys342 is disordered. The span at Ser306–Thr330 shows a compositional bias: basic and acidic residues. Over residues Asp331 to Lys342 the composition is skewed to low complexity.

Belongs to the PrsA family.

The protein resides in the cell membrane. It carries out the reaction [protein]-peptidylproline (omega=180) = [protein]-peptidylproline (omega=0). Plays a major role in protein secretion by helping the post-translocational extracellular folding of several secreted proteins. This is Foldase protein PrsA from Enterococcus faecalis (strain ATCC 700802 / V583).